A 61-amino-acid chain; its full sequence is MANNTITVQLTRSPIGRLPKHRETVKGLGLRKVGQTRELEDTPSVRGMVNKVYYMVKVVGE.

Belongs to the universal ribosomal protein uL30 family. Part of the 50S ribosomal subunit.

This chain is Large ribosomal subunit protein uL30, found in Marinomonas sp. (strain MWYL1).